The chain runs to 641 residues: Leucine-rich repeat protein soc-2 homolog (641 aa).

Residues 1–19 (MNLCSSGATASTTSLSSTG) show a composition bias toward low complexity. Residues 1–146 (MNLCSSGATA…TTKKSKPIQA (146 aa)) form a disordered region. The span at 24 to 56 (SGGGGVAGGGGISNGGGGGGGVTGSGGGGGGNT) shows a compositional bias: gly residues. Over residues 96–106 (GAQQPSGSNGQ) the composition is skewed to low complexity. 20 LRR repeats span residues 161-182 (GIKRLDLSKSSITVIPSTVKDC), 184-205 (QITELYLYSNKIGQLPPEIGCL), 207-228 (NLRNLALNENSLTSLPESLQNC), 230-251 (QLKVLDLRHNKLAEIPPVIYRL), 253-274 (SLTTLYLRFNRITAVADDLRQL), 276-297 (NLTMLSLRENKIRELGSAIGAL), 299-320 (NLTTLDVSHNHLEHLPEDIGNC), 322-343 (NLSALDLQHNELLDIPDSIGNL), 345-367 (SLVRLGMRYNRLTSVPATLKNCK), 368-389 (CMDEFNVEGNGITQLPDGMLAS), 392-413 (GLTTITLSRNQFTSYPTGGPAQ), 416-437 (NVYSINLEHNRIDKIPYGIFSR), 440-461 (GLTKLNMKENMLTALPLDIGTW), 463-484 (NMVELNLATNALQKLPDDIMNL), 486-507 (NLEILILSNNMLKKIPNTIGNL), 509-530 (RLRILDLEENRIETLPHEIGLL), 532-553 (ELQRLILQTNQITMLPRSIGHL), 555-576 (NLTHLSVSENNLQFLPEEIGSL), 578-600 (SLENLYINQNPGLEKLPFELALC), and 602-623 (NLKYLNIDKCPLSTIPPEIQAG).

Belongs to the SHOC2 family.

Acts as a Ras effector and participates in MAPK pathway activation. Probably acts as a regulatory subunit of protein phosphatase that specifically dephosphorylates Raf kinase and stimulate Raf activity at specialized signaling complexes upon Ras activation. The protein is Leucine-rich repeat protein soc-2 homolog (Sur-8) of Drosophila ananassae (Fruit fly).